A 474-amino-acid polypeptide reads, in one-letter code: 3-isopropylmalate dehydratase large subunit (474 aa).

[4Fe-4S] cluster contacts are provided by C353, C413, and C416.

The protein belongs to the aconitase/IPM isomerase family. LeuC type 1 subfamily. In terms of assembly, heterodimer of LeuC and LeuD. Requires [4Fe-4S] cluster as cofactor.

It catalyses the reaction (2R,3S)-3-isopropylmalate = (2S)-2-isopropylmalate. The protein operates within amino-acid biosynthesis; L-leucine biosynthesis; L-leucine from 3-methyl-2-oxobutanoate: step 2/4. Functionally, catalyzes the isomerization between 2-isopropylmalate and 3-isopropylmalate, via the formation of 2-isopropylmaleate. This Roseiflexus sp. (strain RS-1) protein is 3-isopropylmalate dehydratase large subunit.